Consider the following 346-residue polypeptide: Methylthioribose-1-phosphate isomerase (346 aa).

Residues 46–48 (RGA), Arg89, and Gln196 each bind substrate. The Proton donor role is filled by Asp237. Position 247 to 248 (247 to 248 (NK)) interacts with substrate.

Belongs to the eIF-2B alpha/beta/delta subunits family. MtnA subfamily.

It carries out the reaction 5-(methylsulfanyl)-alpha-D-ribose 1-phosphate = 5-(methylsulfanyl)-D-ribulose 1-phosphate. It functions in the pathway amino-acid biosynthesis; L-methionine biosynthesis via salvage pathway; L-methionine from S-methyl-5-thio-alpha-D-ribose 1-phosphate: step 1/6. Functionally, catalyzes the interconversion of methylthioribose-1-phosphate (MTR-1-P) into methylthioribulose-1-phosphate (MTRu-1-P). This is Methylthioribose-1-phosphate isomerase from Geotalea uraniireducens (strain Rf4) (Geobacter uraniireducens).